The primary structure comprises 560 residues: MSNKVKSDIEIASVAEILPVTTIAEHLGLDADALELYGKYKAKLSYDTIHSLKDKEQGKLVLVTAINPTPAGEGKSTVTVGLGDALSKKDKKTVIALREPSLGPTMGIKGGATGGGYAQVIPMEDINLHFTGDFHAITAANNALSAFIDNHMQQGNDLGIDGRRIVWKRVVDLNDRALRKVVVGLGGPIQGVPREDGFDITVASEIMAIICLASDLKDLKKRLSEIVIGYNYKKEPITVGEMGYEGALTLLLKDALKPNLVQTLEHTPAIVHGGPFANIAHGCNSVSATSTALKLGEYVVTEAGFGADLGAEKFLDIKVPALGKAPDCVVIVATIRALKMHGGALKTELSEENVDALAKGFTNLQKHTESIQTFGIPYVVAINKFITDSDAEVAKLEQLCEEHGIPFSLTEVWEKGGDGGLELADKVIAAVESGEEDYKRIYDDAWSIEEKLEAIVTKVYGGIGVELSSKAQKQIVEFKKYGWDRYPICMAKTQYSLSDDPTLLGRPTDFVIHIREFIPKLGAGFVVALTGDVMTMPGLPKKPAALNMDVDENGNAQGLF.

69–76 (TPAGEGKS) contacts ATP.

Belongs to the formate--tetrahydrofolate ligase family.

The enzyme catalyses (6S)-5,6,7,8-tetrahydrofolate + formate + ATP = (6R)-10-formyltetrahydrofolate + ADP + phosphate. Its pathway is one-carbon metabolism; tetrahydrofolate interconversion. In Listeria innocua serovar 6a (strain ATCC BAA-680 / CLIP 11262), this protein is Formate--tetrahydrofolate ligase.